Consider the following 126-residue polypeptide: Large ribosomal subunit protein bL12 (126 aa).

The protein belongs to the bacterial ribosomal protein bL12 family. As to quaternary structure, homodimer. Part of the ribosomal stalk of the 50S ribosomal subunit. Forms a multimeric L10(L12)X complex, where L10 forms an elongated spine to which 2 to 4 L12 dimers bind in a sequential fashion. Binds GTP-bound translation factors.

In terms of biological role, forms part of the ribosomal stalk which helps the ribosome interact with GTP-bound translation factors. Is thus essential for accurate translation. This Methylocella silvestris (strain DSM 15510 / CIP 108128 / LMG 27833 / NCIMB 13906 / BL2) protein is Large ribosomal subunit protein bL12.